The primary structure comprises 244 residues: Type III pantothenate kinase (244 aa).

Residue 12 to 19 (VVGNTHVR) participates in ATP binding. Residues Tyr-79 and 83–86 (GLDR) contribute to the substrate site. The active-site Proton acceptor is Asp-85. Residue Asp-105 coordinates K(+). ATP is bound at residue Thr-108. Thr-163 contributes to the substrate binding site.

It belongs to the type III pantothenate kinase family. As to quaternary structure, homodimer. The cofactor is NH4(+). Requires K(+) as cofactor.

The protein resides in the cytoplasm. It carries out the reaction (R)-pantothenate + ATP = (R)-4'-phosphopantothenate + ADP + H(+). It participates in cofactor biosynthesis; coenzyme A biosynthesis; CoA from (R)-pantothenate: step 1/5. In terms of biological role, catalyzes the phosphorylation of pantothenate (Pan), the first step in CoA biosynthesis. This chain is Type III pantothenate kinase, found in Synechococcus sp. (strain JA-3-3Ab) (Cyanobacteria bacterium Yellowstone A-Prime).